The following is a 103-amino-acid chain: Large ribosomal subunit protein bL21 (103 aa).

It belongs to the bacterial ribosomal protein bL21 family. As to quaternary structure, part of the 50S ribosomal subunit. Contacts protein L20.

Functionally, this protein binds to 23S rRNA in the presence of protein L20. This chain is Large ribosomal subunit protein bL21, found in Pasteurella multocida (strain Pm70).